The primary structure comprises 391 residues: AN1-type zinc finger and UBX domain-containing protein DDB_G0268260 (391 aa).

A compositionally biased stretch (low complexity) spans 1–16 (MQQQSPPTAPQQQQQQ). A disordered region spans residues 1 to 20 (MQQQSPPTAPQQQQQQQRER). 2 AN1-type zinc fingers span residues 26-74 (DHIG…QREN) and 118-166 (APKS…IINS). Zn(2+)-binding residues include C32, C37, C47, C50, C55, H58, H64, C66, C124, C129, C139, C142, C147, H150, H156, and C158. Low complexity predominate over residues 185–236 (NINNNINNNKNNNNNNNNNNNNNNNNNNNNNNNNNNNNNNNNNNNNNSNNNN). The tract at residues 185 to 240 (NINNNINNNKNNNNNNNNNNNNNNNNNNNNNNNNNNNNNNNNNNNNNSNNNNKLIY) is disordered. The UBX domain maps to 278 to 356 (SSEEIGEIGI…GLLPVSTLYM (79 aa)).

This is AN1-type zinc finger and UBX domain-containing protein DDB_G0268260 from Dictyostelium discoideum (Social amoeba).